The chain runs to 469 residues: Extracellular endo-alpha-(1-&gt;5)-L-arabinanase 2 (469 aa).

A signal peptide spans 1 to 26 (MFNRLFRVCFLAALIMAFTLPNSVYA). The Proton acceptor role is filled by D38. Substrate is bound by residues D38, D122, 168 to 171 (NVVD), 188 to 190 (SYS), and 220 to 224 (HSRIE). E224 serves as the catalytic Proton donor. H318 lines the Ca(2+) pocket.

Belongs to the glycosyl hydrolase 43 family. As to quaternary structure, homodimer. It depends on Ca(2+) as a cofactor.

It is found in the secreted. The catalysed reaction is Endohydrolysis of (1-&gt;5)-alpha-arabinofuranosidic linkages in (1-&gt;5)-arabinans.. Its pathway is glycan metabolism; L-arabinan degradation. In terms of biological role, involved in the degradation of arabinan and is a key enzyme in the complete degradation of the plant cell wall. Catalyzes the internal cleavage of alpha-(1-&gt;5)-L-arabinofuranosyl residues of the alpha-1,5-L-arabinan to produce arabino-oligosaccharides and L-arabinose. It is also active toward linear branched sugar beet arabinan, and pectin from apple. The sequence is that of Extracellular endo-alpha-(1-&gt;5)-L-arabinanase 2 (abn2) from Bacillus subtilis (strain 168).